Consider the following 184-residue polypeptide: C-phycoerythrin beta chain (184 aa).

Cys-48 and Cys-59 together coordinate (2R,3E)-phycoerythrobilin. Asn-70 carries the post-translational modification N4-methylasparagine. The (2R,3E)-phycoerythrobilin site is built by Cys-80 and Cys-165.

It belongs to the phycobiliprotein family. In terms of assembly, heterodimer of an alpha and a beta chain. Contains three covalently linked bilin chromophores.

It is found in the cellular thylakoid membrane. Light-harvesting photosynthetic bile pigment-protein from the phycobiliprotein complex. The protein is C-phycoerythrin beta chain (cpeB) of Microchaete diplosiphon (Fremyella diplosiphon).